A 295-amino-acid chain; its full sequence is Ubiquinol-cytochrome c reductase complex assembly factor 1 (295 aa).

It belongs to the CBP3 family. In terms of assembly, interacts with UQCC2. Interacts with UQCC3. Forms a complex, named COMB/coordinator of mitochondrial CYTB biogenesis, composed of UQCC1, UQCC2, UQCC4, UQCC5 and UQCC6; stabilizes nascent cytochrome b/MT-CYB and promotes its membrane insertion. Forms a complex, named COMA, composed of UQCC1, UQCC2 and UQCC4; activates MT-CYB translation. Forms a complex, named COMC, composed of UQCC1, UQCC2; UQCC3 and UQCC4; mediates MT-CYB hemylation and association with the first nuclear-encoded CIII subunit UQCRQ. In terms of tissue distribution, in the brain it is restricted to the olfactory bulb, the hippocampus, the piriform cortex and the Purkinje cells.

The protein resides in the mitochondrion inner membrane. It localises to the cytoplasmic vesicle. Required for the assembly of the ubiquinol-cytochrome c reductase complex (mitochondrial respiratory chain complex III or cytochrome b-c1 complex). Involved in cytochrome b translation and/or stability. This is Ubiquinol-cytochrome c reductase complex assembly factor 1 (Uqcc1) from Mus musculus (Mouse).